A 528-amino-acid polypeptide reads, in one-letter code: Protein MGF 505-7R (528 aa).

5 ANK repeats span residues 54–83 (SIND…NLHY), 129–158 (GCDL…LLNV), 261–290 (SVKR…IPRG), 292–321 (IERL…YKVK), and 322–352 (NVKK…LLDA).

This sequence belongs to the asfivirus MGF 505 family. In terms of assembly, interacts with host STING1. Interacts with host JAK1; this interaction leads to JAK1 degradation. Interacts with host JAK2; this interaction leads to JAK2 degradation. Interacts with host RELA; this interaction inhibits NF-kappa-B promoter activity.

The protein localises to the host cytoplasm. Functionally, plays a role in virus cell tropism, and may be required for efficient virus replication in macrophages. Interferes with host NF-kappa-B promoter activity mediated by TLR8. Mechanistically, inhibits the phosphorylation and subsequent nuclear translocation of host NF-kappa-B RELA subunit downstream of TLR8. Promotes the expression of the autophagy-related protein host ULK1 to degrade host STING and inhibit the interferon response. Inhibits also JAK1- and JAK2-mediated signaling and thus negatively regulates the IFN-gamma signaling. This is Protein MGF 505-7R from African swine fever virus (strain Badajoz 1971 Vero-adapted) (Ba71V).